We begin with the raw amino-acid sequence, 690 residues long: Proprotein convertase subtilisin/kexin type 9 (690 aa).

The first 28 residues, 1 to 28, serve as a signal peptide directing secretion; that stretch reads MGTVRSRRLWWPLPLLLLLLLGPAGARA. The propeptide occupies 29 to 150; sequence QEDDDGDYEE…IEEDSYVFAQ (122 aa). A Sulfotyrosine modification is found at Y36. The residue at position 45 (S45) is a Phosphoserine. In terms of domain architecture, Inhibitor I9 spans 75 to 147; sequence TYVVVLKEET…VDYIEEDSYV (73 aa). Residues 153–459 form the Peptidase S8 domain; sequence PWNLERITPA…GWQLFCRTVW (307 aa). Active-site charge relay system residues include D184 and H224. 2 cysteine pairs are disulfide-bonded: C221–C253 and C321–C356. S384 acts as the Charge relay system in catalysis. Positions 448–690 are C-terminal domain; the sequence is GAGWQLFCRT…HLAQASQELQ (243 aa). 3 disulfide bridges follow: C455–C525, C475–C524, and C484–C507. An N-linked (GlcNAc...) asparagine glycan is attached at N531. 6 disulfide bridges follow: C532–C599, C550–C598, C560–C586, C606–C677, C624–C676, and C633–C652. S686 carries the phosphoserine modification.

The protein belongs to the peptidase S8 family. Monomer. Can self-associate to form dimers and higher multimers which may have increased LDLR degrading activity. The precursor protein but not the mature protein may form multimers. Interacts with APOB, VLDLR, LRP8/APOER2 and BACE1. The full-length immature form (pro-PCSK9) interacts with SCNN1A, SCNN1B and SCNN1G. The pro-PCSK9 form (via C-terminal domain) interacts with LDLR. Interacts (via the C-terminal domain) with ANXA2 (via repeat Annexin 1); the interaction inhibits the degradation of LDLR. Requires Ca(2+) as cofactor. In terms of processing, cleavage by furin and PCSK5 generates a truncated inactive protein that is unable to induce LDLR degradation. Undergoes autocatalytic cleavage in the endoplasmic reticulum to release the propeptide from the N-terminus and the cleavage of the propeptide is strictly required for its maturation and activation. The cleaved propeptide however remains associated with the catalytic domain through non-covalent interactions, preventing potential substrates from accessing its active site. As a result, it is secreted from cells as a propeptide-containing, enzymatically inactive protein. Post-translationally, phosphorylation protects the propeptide against proteolysis.

It is found in the cytoplasm. The protein resides in the secreted. It localises to the endosome. The protein localises to the lysosome. Its subcellular location is the cell surface. It is found in the endoplasmic reticulum. The protein resides in the golgi apparatus. Its activity is regulated as follows. Its proteolytic activity is autoinhibited by the non-covalent binding of the propeptide to the catalytic domain. Inhibited by EGTA. In terms of biological role, crucial player in the regulation of plasma cholesterol homeostasis. Binds to low-density lipid receptor family members: low density lipoprotein receptor (LDLR), very low density lipoprotein receptor (VLDLR), apolipoprotein E receptor (LRP1/APOER) and apolipoprotein receptor 2 (LRP8/APOER2), and promotes their degradation in intracellular acidic compartments. Acts via a non-proteolytic mechanism to enhance the degradation of the hepatic LDLR through a clathrin LDLRAP1/ARH-mediated pathway. May prevent the recycling of LDLR from endosomes to the cell surface or direct it to lysosomes for degradation. Can induce ubiquitination of LDLR leading to its subsequent degradation. Inhibits intracellular degradation of APOB via the autophagosome/lysosome pathway in a LDLR-independent manner. Involved in the disposal of non-acetylated intermediates of BACE1 in the early secretory pathway. Inhibits epithelial Na(+) channel (ENaC)-mediated Na(+) absorption by reducing ENaC surface expression primarily by increasing its proteasomal degradation. Regulates neuronal apoptosis via modulation of LRP8/APOER2 levels and related anti-apoptotic signaling pathways. The chain is Proprotein convertase subtilisin/kexin type 9 (PCSK9) from Lagothrix lagotricha (Brown woolly monkey).